The primary structure comprises 465 residues: Gamma-aminobutyric acid receptor subunit rho-2 (465 aa).

The first 20 residues, 1 to 20, serve as a signal peptide directing secretion; that stretch reads MPYFSRLILFLFCLVVLVES. The Extracellular portion of the chain corresponds to 21-260; sequence RKPKKRRWTG…LYINFTLRRH (240 aa). Arginine 105 contacts 4-aminobutanoate. An N-linked (GlcNAc...) asparagine glycan is attached at asparagine 120. Position 169 (serine 169) interacts with 4-aminobutanoate. The cysteines at positions 178 and 192 are disulfide-linked. Glutamate 197 provides a ligand contact to 4-aminobutanoate. N-linked (GlcNAc...) asparagine glycosylation is present at asparagine 254. The chain crosses the membrane as a helical span at residues 261–281; it reads IFFFLLQTYFPATLMVMLSWV. At 282–293 the chain is on the cytoplasmic side; the sequence is SFWIDRRAVPAR. The helical transmembrane segment at 294–314 threads the bilayer; sequence VSLGITTVLTMSTIITGVNAS. The Extracellular portion of the chain corresponds to 315 to 325; the sequence is MPRVSYIKAVD. A helical transmembrane segment spans residues 326–346; the sequence is IYLWVSFVFVFLSVLEYAAVN. The Cytoplasmic portion of the chain corresponds to 347–444; that stretch reads YLTTVQERKE…FQNTHAIDKY (98 aa). A helical membrane pass occupies residues 445 to 465; the sequence is SRLIFPASYIFFNLIYWSVFA.

The protein belongs to the ligand-gated ion channel (TC 1.A.9) family. Gamma-aminobutyric acid receptor (TC 1.A.9.5) subfamily. GABRR2 sub-subfamily. In terms of assembly, three rho subunits (rho-1/GBRR1, rho-2/GBRR2 and rho-3/GBRR3) coassemble either to form functional homopentamers or heteropentamers. Rho-2 is unable to form a functional homopentamer. Interacts with SQSTM1.

It is found in the postsynaptic cell membrane. The protein localises to the cell membrane. The enzyme catalyses chloride(in) = chloride(out). In terms of biological role, rho subunit of the pentameric ligand-gated chloride channels responsible for mediating the effects of gamma-aminobutyric acid (GABA), the major inhibitory neurotransmitter in the brain. Rho-containing GABA-gated chloride channels are a subclass of GABA(A) receptors (GABAARs) entirely composed of rho subunits, where GABA molecules bind at the rho intersubunit interfaces. When activated by GABA, rho-GABAARs selectively allow the flow of chloride anions across the cell membrane down their electrochemical gradient. Rho-2 GABAARs may contribute to the regulation of glial development in the cerebellum by controlling extrasynaptic transmission. Rho-2 GABAARs are also involved in neuronal tonic (extrasynaptic) and phasic (synaptic) transmission in the Purkinje neurons of the cerebellum. Rho-2 GABAARs expressed in retina may play a role in retinal neurotransmission. The sequence is that of Gamma-aminobutyric acid receptor subunit rho-2 (GABRR2) from Bos taurus (Bovine).